A 130-amino-acid polypeptide reads, in one-letter code: S-adenosylmethionine decarboxylase proenzyme (130 aa).

Catalysis depends on serine 78, which acts as the Schiff-base intermediate with substrate; via pyruvic acid. At serine 78 the chain carries Pyruvic acid (Ser); by autocatalysis. The Proton acceptor; for processing activity role is filled by histidine 83. Cysteine 98 (proton donor; for catalytic activity) is an active-site residue.

The protein belongs to the prokaryotic AdoMetDC family. Type 1 subfamily. Heterotetramer of two alpha and two beta chains arranged as a dimer of alpha/beta heterodimers. Requires pyruvate as cofactor. In terms of processing, is synthesized initially as an inactive proenzyme. Formation of the active enzyme involves a self-maturation process in which the active site pyruvoyl group is generated from an internal serine residue via an autocatalytic post-translational modification. Two non-identical subunits are generated from the proenzyme in this reaction, and the pyruvate is formed at the N-terminus of the alpha chain, which is derived from the carboxyl end of the proenzyme. The post-translation cleavage follows an unusual pathway, termed non-hydrolytic serinolysis, in which the side chain hydroxyl group of the serine supplies its oxygen atom to form the C-terminus of the beta chain, while the remainder of the serine residue undergoes an oxidative deamination to produce ammonia and the pyruvoyl group blocking the N-terminus of the alpha chain.

The enzyme catalyses S-adenosyl-L-methionine + H(+) = S-adenosyl 3-(methylsulfanyl)propylamine + CO2. Its pathway is amine and polyamine biosynthesis; S-adenosylmethioninamine biosynthesis; S-adenosylmethioninamine from S-adenosyl-L-methionine: step 1/1. Its function is as follows. Catalyzes the decarboxylation of S-adenosylmethionine to S-adenosylmethioninamine (dcAdoMet), the propylamine donor required for the synthesis of the polyamines spermine and spermidine from the diamine putrescine. The chain is S-adenosylmethionine decarboxylase proenzyme from Aeropyrum pernix (strain ATCC 700893 / DSM 11879 / JCM 9820 / NBRC 100138 / K1).